The chain runs to 319 residues: L-lactate dehydrogenase (319 aa).

NAD(+) is bound by residues 10–11, D32, R37, Y62, and 76–77; these read RV and GV. Substrate contacts are provided by residues Q79, R85, and 117 to 120; that span reads NPVD. NAD(+) contacts are provided by residues 115–117 and S140; that span reads VTN. Residue 145–148 coordinates substrate; it reads DTAR. 2 residues coordinate beta-D-fructose 1,6-bisphosphate: R150 and H165. The active-site Proton acceptor is H172. Y217 carries the post-translational modification Phosphotyrosine. T226 lines the substrate pocket.

Belongs to the LDH/MDH superfamily. LDH family. As to quaternary structure, homotetramer.

Its subcellular location is the cytoplasm. The catalysed reaction is (S)-lactate + NAD(+) = pyruvate + NADH + H(+). It functions in the pathway fermentation; pyruvate fermentation to lactate; (S)-lactate from pyruvate: step 1/1. With respect to regulation, allosterically activated by fructose 1,6-bisphosphate (FBP). Inactivated by Mn(2+), Co(2+), Cd(2+) and Zn(2+). Functionally, catalyzes the conversion of lactate to pyruvate. It is stereospecific for L(+)-lactate. This Thermotoga maritima (strain ATCC 43589 / DSM 3109 / JCM 10099 / NBRC 100826 / MSB8) protein is L-lactate dehydrogenase.